We begin with the raw amino-acid sequence, 366 residues long: Anhydro-N-acetylmuramic acid kinase (366 aa).

Residue 10-17 (GTSLDGVD) participates in ATP binding.

Belongs to the anhydro-N-acetylmuramic acid kinase family.

The catalysed reaction is 1,6-anhydro-N-acetyl-beta-muramate + ATP + H2O = N-acetyl-D-muramate 6-phosphate + ADP + H(+). It functions in the pathway amino-sugar metabolism; 1,6-anhydro-N-acetylmuramate degradation. The protein operates within cell wall biogenesis; peptidoglycan recycling. Functionally, catalyzes the specific phosphorylation of 1,6-anhydro-N-acetylmuramic acid (anhMurNAc) with the simultaneous cleavage of the 1,6-anhydro ring, generating MurNAc-6-P. Is required for the utilization of anhMurNAc either imported from the medium or derived from its own cell wall murein, and thus plays a role in cell wall recycling. The protein is Anhydro-N-acetylmuramic acid kinase of Nitrobacter winogradskyi (strain ATCC 25391 / DSM 10237 / CIP 104748 / NCIMB 11846 / Nb-255).